The following is a 307-amino-acid chain: O-acetylserine dependent cystathionine beta-synthase (307 aa).

Lysine 44 bears the N6-(pyridoxal phosphate)lysine mark. Pyridoxal 5'-phosphate-binding positions include asparagine 74, glycine 178–threonine 182, and serine 265.

This sequence belongs to the cysteine synthase/cystathionine beta-synthase family. Pyridoxal 5'-phosphate is required as a cofactor.

It catalyses the reaction O-acetyl-L-serine + L-homocysteine = L,L-cystathionine + acetate + H(+). Catalyzes the conversion of O-acetylserine and homocysteine to cystathionine. This chain is O-acetylserine dependent cystathionine beta-synthase (mccA), found in Bacillus subtilis (strain 168).